A 1609-amino-acid chain; its full sequence is Chitin synthase 5 (1609 aa).

3 disordered regions span residues 1-188 (MNPF…DRER), 248-280 (SGLG…GRDE), and 294-320 (VSLR…ESKT). Topologically, residues 1–326 (MNPFESLPDA…ESKTSRIAPG (326 aa)) are cytoplasmic. Positions 34–44 (PGSTGRPQNPI) are enriched in polar residues. A compositionally biased stretch (low complexity) spans 61–82 (PQQQQQQQQQQQQQQQRSQQPF). Residues 100–111 (AYLNSTSSQPTQ) show a composition bias toward polar residues. Residues 134–146 (DSVKSYGDDKRSI) are compositionally biased toward basic and acidic residues. The span at 147–163 (NDPNSSSTALTQVNSLD) shows a compositional bias: polar residues. Residues 253 to 267 (TGPTNVPPGGLGRAP) are compositionally biased toward low complexity. Positions 307-320 (PSKEVPRDLGESKT) are enriched in basic and acidic residues. Residues 327 to 347 (PVGGWMIYCYILTICCPGPFL) form a helical membrane-spanning segment. Over 348–364 (RIFGIRTPEQQRAWREK) the chain is Extracellular. The helical transmembrane segment at 365–385 (MGLIGIITLIMAAVGFLTFGF) threads the bilayer. Residues 386–624 (TQTVCGQQPD…ASKVELYLSL (239 aa)) lie on the Cytoplasmic side of the membrane. A helical transmembrane segment spans residues 625-645 (VFIIGVVAIKFFMAVMFGWFI). Residues 646–1176 (SWRLGNYANE…MRFVVFMELT (531 aa)) are Extracellular-facing. Asn-654 carries an N-linked (GlcNAc...) asparagine glycan. A disordered region spans residues 729-767 (GVASPLGGSPPGSPSVAGGRSSASLAPAHSRRSSFSGSP). The segment covering 742–752 (PSVAGGRSSAS) has biased composition (low complexity). Asn-1015 and Asn-1144 each carry an N-linked (GlcNAc...) asparagine glycan. The chain crosses the membrane as a helical span at residues 1177–1197 (GTLVLPAAIAFTLYVVVQAFL). The Cytoplasmic segment spans residues 1198 to 1202 (PNVPT). The helical transmembrane segment at 1203 to 1223 (PTIPLILLALILGLPGILIVV) threads the bilayer. At 1224–1227 (TSRK) the chain is on the extracellular side. The chain crosses the membrane as a helical span at residues 1228 to 1248 (IAYVGWMLIYLLSLPIWNFVL). Topologically, residues 1249–1609 (PLYAYWHMDD…PPGAAPPSFD (361 aa)) are cytoplasmic. Disordered stretches follow at residues 1354-1381 (PNAM…PSGA) and 1399-1609 (TDAK…PSFD). Polar residues-rich tracts occupy residues 1502–1514 (NVST…TVSE) and 1530–1552 (GSAS…QTRP). Over residues 1568-1588 (AQGVRQVQRGARRSQMPNSAA) the composition is skewed to low complexity.

It belongs to the chitin synthase family. Class IV subfamily.

Its subcellular location is the cell membrane. It localises to the cytoplasmic vesicle membrane. It carries out the reaction [(1-&gt;4)-N-acetyl-beta-D-glucosaminyl](n) + UDP-N-acetyl-alpha-D-glucosamine = [(1-&gt;4)-N-acetyl-beta-D-glucosaminyl](n+1) + UDP + H(+). In terms of biological role, polymerizes chitin, a structural polymer of the cell wall and septum, by transferring the sugar moiety of UDP-GlcNAc to the non-reducing end of the growing chitin polymer. This is Chitin synthase 5 from Mycosarcoma maydis (Corn smut fungus).